The primary structure comprises 191 residues: Photosystem I assembly protein Ycf4 (191 aa).

Transmembrane regions (helical) follow at residues 34 to 54 and 68 to 88; these read VASM…SSYF and IFVP…LLAI.

The protein belongs to the Ycf4 family.

The protein resides in the cellular thylakoid membrane. Its function is as follows. Seems to be required for the assembly of the photosystem I complex. This chain is Photosystem I assembly protein Ycf4, found in Prochlorococcus marinus (strain NATL2A).